The following is a 274-amino-acid chain: Acetyl-coenzyme A carboxylase carboxyl transferase subunit alpha (274 aa).

The CoA carboxyltransferase C-terminal domain occupies 2-250 (NKEFIKSIVV…KKEIMNAMNE (249 aa)).

This sequence belongs to the AccA family. As to quaternary structure, acetyl-CoA carboxylase is a heterohexamer composed of biotin carboxyl carrier protein (AccB), biotin carboxylase (AccC) and two subunits each of ACCase subunit alpha (AccA) and ACCase subunit beta (AccD).

It localises to the cytoplasm. The catalysed reaction is N(6)-carboxybiotinyl-L-lysyl-[protein] + acetyl-CoA = N(6)-biotinyl-L-lysyl-[protein] + malonyl-CoA. It functions in the pathway lipid metabolism; malonyl-CoA biosynthesis; malonyl-CoA from acetyl-CoA: step 1/1. Component of the acetyl coenzyme A carboxylase (ACC) complex. First, biotin carboxylase catalyzes the carboxylation of biotin on its carrier protein (BCCP) and then the CO(2) group is transferred by the carboxyltransferase to acetyl-CoA to form malonyl-CoA. The polypeptide is Acetyl-coenzyme A carboxylase carboxyl transferase subunit alpha (Clostridium botulinum (strain Alaska E43 / Type E3)).